A 239-amino-acid polypeptide reads, in one-letter code: Probable transcriptional regulatory protein RBAM_007230 (239 aa).

Belongs to the TACO1 family. YeeN subfamily.

Its subcellular location is the cytoplasm. The chain is Probable transcriptional regulatory protein RBAM_007230 from Bacillus velezensis (strain DSM 23117 / BGSC 10A6 / LMG 26770 / FZB42) (Bacillus amyloliquefaciens subsp. plantarum).